The chain runs to 357 residues: Sulfate/thiosulfate import ATP-binding protein CysA (357 aa).

The 235-residue stretch at 3-237 (ITIQNLNKHF…PENAFVTEFL (235 aa)) folds into the ABC transporter domain. Residue 35–42 (GPSGCGKT) coordinates ATP.

The protein belongs to the ABC transporter superfamily. Sulfate/tungstate importer (TC 3.A.1.6) family. In terms of assembly, the complex is composed of two ATP-binding proteins (CysA), two transmembrane proteins (CysT and CysW) and a solute-binding protein (CysP).

It is found in the cell inner membrane. It catalyses the reaction sulfate(out) + ATP + H2O = sulfate(in) + ADP + phosphate + H(+). The enzyme catalyses thiosulfate(out) + ATP + H2O = thiosulfate(in) + ADP + phosphate + H(+). In terms of biological role, part of the ABC transporter complex CysAWTP involved in sulfate/thiosulfate import. Responsible for energy coupling to the transport system. The protein is Sulfate/thiosulfate import ATP-binding protein CysA of Neisseria meningitidis serogroup B (strain ATCC BAA-335 / MC58).